The chain runs to 266 residues: Lipooligosaccharide biosynthesis protein lic2B (266 aa).

This sequence belongs to the glycosyltransferase 25 family.

Functionally, involved in extracellular lipooligosaccharide (LOS) biosynthesis and virulence expression. Involved in the synthesis of the oligosaccharide moiety of the LOS molecule by adding GalNAc. This Haemophilus influenzae protein is Lipooligosaccharide biosynthesis protein lic2B (lic2B).